A 339-amino-acid polypeptide reads, in one-letter code: MNRLIKFSFNLILIFVLGLGLSGCVTTTRIPVQSSSPWEEIELANDDNPLDIAFVDDNHGFLVGANRLILETTDGGSTWEERDLDIPAEENFRLMSIDFKEDEGWIVGQPNLVLHSEDAGKNWTRLSLGSQLPGNPYLITTLDTSSAELATTAGAVYRTTDGGKNWEGRVAEASGGVRDLRRKEDGTYVSVSSLGNFFVTLDKTDQAWQSHQRASSKRVQTLGFKPDGQLWMLSRGAEIRLNDASGDYESWSKPIIPLVNGYNYMDMAWDPEGNIWAGGGNGTLLVSKDDGNSWEKDPIGYATPTNFIRIFFLKNPNGNPPKGFVLGERGHVLRWVGYS.

The N-terminal stretch at 1–23 (MNRLIKFSFNLILIFVLGLGLSG) is a signal peptide. Cysteine 24 carries N-palmitoyl cysteine lipidation. Residue cysteine 24 is the site of S-diacylglycerol cysteine attachment.

This sequence belongs to the Ycf48 family. In terms of assembly, part of early PSII assembly complexes which includes D1 (psbA) and PsbI; not found in mature PSII. Binds to the lumenal side of PSII complexes. Interacts with YidC.

The protein localises to the cellular thylakoid membrane. Its function is as follows. A factor required for optimal assembly of photosystem II (PSII), acting in the early stages of PSII assembly. Also plays a role in replacement of photodamaged D1 (psbA). Assists YidC in synthesis of chlorophyll-binding proteins. The sequence is that of Photosystem II assembly lipoprotein Ycf48 from Prochlorococcus marinus (strain SARG / CCMP1375 / SS120).